The primary structure comprises 793 residues: Acetyl-CoA decarbonylase/synthase complex subunit alpha (793 aa).

[4Fe-4S] cluster is bound by residues cysteine 55, cysteine 58, cysteine 63, and cysteine 73. Histidine 96 serves as a coordination point for CO. 3 residues coordinate [Ni-4Fe-4S] cluster: histidine 229, cysteine 257, and cysteine 309. 2 4Fe-4S ferredoxin-type domains span residues 393–422 and 432–461; these read EQQFKDTLATCTECNQCAFVCPPHIRISEM and EPFSSTYEVCVGCQRCEQTCPQEIPILKLY. The [4Fe-4S] cluster site is built by cysteine 403, cysteine 406, cysteine 409, cysteine 413, cysteine 441, cysteine 444, cysteine 447, and cysteine 451. [Ni-4Fe-4S] cluster contacts are provided by cysteine 509, cysteine 538, and cysteine 573.

This sequence belongs to the Ni-containing carbon monoxide dehydrogenase family. Heterotetramer of two alpha and two epsilon subunits. The ACDS complex is made up of alpha, epsilon, beta, gamma and delta subunits with a probable stoichiometry of (alpha(2)epsilon(2))(4)-beta(8)-(gamma(1)delta(1))(8). [4Fe-4S] cluster serves as cofactor. It depends on [Ni-4Fe-4S] cluster as a cofactor.

It catalyses the reaction CO + 2 oxidized [2Fe-2S]-[ferredoxin] + H2O = 2 reduced [2Fe-2S]-[ferredoxin] + CO2 + 2 H(+). Its function is as follows. Part of the ACDS complex that catalyzes the reversible cleavage of acetyl-CoA, allowing autotrophic growth from CO(2). The alpha-epsilon subcomponent functions as a carbon monoxide dehydrogenase. The chain is Acetyl-CoA decarbonylase/synthase complex subunit alpha from Methanothrix soehngenii (Methanosaeta concilii).